The chain runs to 423 residues: MKAELIAVGTEILTGQIVNTNAQFLSEKMAELGIDVYFQTAVGDNEERLLSVIDIASQRSDLVILCGGLGPTDDDLTKQTLAKYLGKALVFDEQAGQKLDTFFAHRKHTARTPNNQRQAQLIEGSVALQNQTGLAVGGLITVDGVTYVVLPGPPSELKPMVKNELVPLLSASHASLYSRVLRFFGIGESQLVTALEDLIKHQTDPTIAPYAKTGEVTLRLSTKADNQALADERLNRLEAQLLSIRTVDNQPLRRLLYGYGEDNSLARETFELLKRSGKTITAAESLTAGLFQAQLTDFAGASQVFNGGFITYSIEEKAKMLGIPLVELQRHGVVSSFTAEQMAAQARCLTNSDIGIGLTGVAGPEALEGQPAGTVFIGLATKNKVESLKVVIGGRSRLDVRYIAALYAFNMVRKALLKSENLL.

Belongs to the CinA family.

In Streptococcus equi subsp. zooepidemicus (strain MGCS10565), this protein is Putative competence-damage inducible protein.